Reading from the N-terminus, the 657-residue chain is Histidine ammonia-lyase (657 aa).

Positions 253 to 255 form a cross-link, 5-imidazolinone (Ala-Gly); sequence ASG. At S254 the chain carries 2,3-didehydroalanine (Ser). T396 is subject to Phosphothreonine. S635 is modified (phosphoserine). T637 bears the Phosphothreonine mark. S648 is subject to Phosphoserine.

The protein belongs to the PAL/histidase family. Post-translationally, contains an active site 4-methylidene-imidazol-5-one (MIO), which is formed autocatalytically by cyclization and dehydration of residues Ala-Ser-Gly. Liver and skin.

The catalysed reaction is L-histidine = trans-urocanate + NH4(+). The protein operates within amino-acid degradation; L-histidine degradation into L-glutamate; N-formimidoyl-L-glutamate from L-histidine: step 1/3. The polypeptide is Histidine ammonia-lyase (Hal) (Rattus norvegicus (Rat)).